A 333-amino-acid chain; its full sequence is MSPITLDLTSDFNPANTTGAGSSSSQPRTLLVAPPSVASHEERISALFSTYPRDTTDLHMLDRLAAGLVTLPTSTYDLILVLTDPDGSRHAEASALLSNRAVWSLLVPALKAGGKLRSEDGTLGRDTTTPEAREAVLAGLVAGADGFTKPDYAEEEAVPLRFGLKRKTNPNPVVAPIQPVAQVVTAAPAGVGFVTLDLNDDLDLDGEDDDDDVIDEDTLLTEADLRRPIQQPPECQPKPGKKRRACKDCTCGLAERLEAEDKARRDKADQALNTLKLKSEDLLELDLTVPGKTGSCGSCALGDAFRCAGCPYLGLPPFKVGEEVSILNNVPQL.

A disordered region spans residues 1–29 (MSPITLDLTSDFNPANTTGAGSSSSQPRT). The span at 7–28 (DLTSDFNPANTTGAGSSSSQPR) shows a compositional bias: polar residues. Residues 23–158 (SSSQPRTLLV…KPDYAEEEAV (136 aa)) form an N-terminal SAM-like domain region. The linker stretch occupies residues 159 to 225 (PLRFGLKRKT…EDTLLTEADL (67 aa)). The [2Fe-2S] cluster site is built by cysteine 235, cysteine 246, cysteine 249, and cysteine 251. Residues 235–251 (CQPKPGKKRRACKDCTC) form a fe-S binding site A region. Positions 296, 299, 307, and 310 each coordinate [4Fe-4S] cluster. Short sequence motifs (cx2C motif) lie at residues 296–299 (CGSC) and 307–310 (CAGC). The interval 296–310 (CGSCALGDAFRCAGC) is fe-S binding site B.

Belongs to the anamorsin family. Monomer. Interacts with tah18. Interacts with mia40. [2Fe-2S] cluster is required as a cofactor. [4Fe-4S] cluster serves as cofactor.

It is found in the cytoplasm. The protein localises to the mitochondrion intermembrane space. Functionally, component of the cytosolic iron-sulfur (Fe-S) protein assembly (CIA) machinery required for the maturation of extramitochondrial Fe-S proteins. Part of an electron transfer chain functioning in an early step of cytosolic Fe-S biogenesis, facilitating the de novo assembly of a [4Fe-4S] cluster on the scaffold complex cfd1-nbp35. Electrons are transferred to dre2 from NADPH via the FAD- and FMN-containing protein tah18. Tah18-dre2 are also required for the assembly of the diferric tyrosyl radical cofactor of ribonucleotide reductase (RNR), probably by providing electrons for reduction during radical cofactor maturation in the catalytic small subunit rnr2. The protein is Fe-S cluster assembly protein dre2 of Neurospora crassa (strain ATCC 24698 / 74-OR23-1A / CBS 708.71 / DSM 1257 / FGSC 987).